The chain runs to 362 residues: Fructose-bisphosphate aldolase (362 aa).

Dihydroxyacetone phosphate is bound at residue Asp-33. The D-glyceraldehyde 3-phosphate site is built by Ser-35 and Thr-38. Residue Arg-42 participates in beta-D-fructose 1,6-bisphosphate binding. Lys-106 serves as a coordination point for D-glyceraldehyde 3-phosphate. Lys-145 serves as a coordination point for dihydroxyacetone phosphate. D-glyceraldehyde 3-phosphate is bound at residue Glu-188. Glu-188 functions as the Proton acceptor in the catalytic mechanism. The dihydroxyacetone phosphate site is built by Lys-230, Ser-272, and Gly-273. Lys-230 (schiff-base intermediate with dihydroxyacetone phosphate) is an active-site residue. Beta-D-fructose 1,6-bisphosphate contacts are provided by residues 272–274 (SGG) and Ser-300. The dihydroxyacetone phosphate site is built by Gly-302 and Arg-303. A beta-D-fructose 1,6-bisphosphate-binding site is contributed by Arg-303.

It belongs to the class I fructose-bisphosphate aldolase family. In terms of assembly, homotetramer. Interacts with TRAP (via cytoplasmic domain); the interaction prevents substrate binding and thereby inhibits aldolase activity. Interacts with MTRAP (via cytoplasmic domain); MTRAP phosphorylation may increase the binding to FBPA. Interact with RH1 (via cytoplasmic domain). Interacts with RH2b (via cytoplasmic domain). Interacts with RH4 (via cytoplasmic domain). Interacts with AMA1 (via cytoplasmic domain); the interaction is weak, however it may be increased upon AMA1 phosphorylation. Interacts with EBA140 (via cytoplasmic domain); the interaction is weak. Interacts with EBA175 (via cytoplasmic domain); the interaction is weak. Interacts with EBA181 (via cytoplasmic domain); the interaction is weak. Interacts with G-actin and F-actin. May interact with ACT2/actin II; the interaction inhibits FBPA catalytic activity. Interacts with human SLC4A1/band 3 (via N-terminus); the interaction inhibits FBPA catalytic activity.

The protein localises to the cytoplasm. It localises to the membrane. The protein resides in the host cell membrane. The enzyme catalyses beta-D-fructose 1,6-bisphosphate = D-glyceraldehyde 3-phosphate + dihydroxyacetone phosphate. It participates in carbohydrate degradation; glycolysis; D-glyceraldehyde 3-phosphate and glycerone phosphate from D-glucose: step 4/4. The cytoplasmic tail of TRAP and probably other adhesins acts as a competitive inhibitor as the binding sites of the glycolytic substrate fructose 1,6-bisphosphate and TRAP partially overlap. Inhibited by suramin, an antiparasitic drug used to treat Trypanosome-mediated infection. Its function is as follows. Plays a key role in glycolysis by catalyzing the cleavage of fructose 1,6-bisphosphate into dihydroxyacetone phosphate and glyceraldehyde 3-phosphate. Independently of its catalytic activity, connects the actin filaments, and thus the actomyosin motor, to cell surface adhesins of the thrombospondin-related anonymous protein (TRAP), the erythrocyte binding ligand (EBL) and reticulocyte binding homolog (RH) protein families; this interaction is probably involved in transducing the motor force across the parasite surface required for sporozoite and ookinete gliding motility and merozoite invasion. Stimulates actin polymerisation. The chain is Fructose-bisphosphate aldolase from Plasmodium falciparum (isolate K1 / Thailand).